A 300-amino-acid polypeptide reads, in one-letter code: UPF0282 protein TGAM_0379 (300 aa).

It belongs to the UPF0282 family.

The sequence is that of UPF0282 protein TGAM_0379 from Thermococcus gammatolerans (strain DSM 15229 / JCM 11827 / EJ3).